Consider the following 242-residue polypeptide: 1-(5-phosphoribosyl)-5-[(5-phosphoribosylamino)methylideneamino] imidazole-4-carboxamide isomerase (242 aa).

Asp8 functions as the Proton acceptor in the catalytic mechanism. Residue Asp129 is the Proton donor of the active site.

The protein belongs to the HisA/HisF family.

The protein localises to the cytoplasm. The catalysed reaction is 1-(5-phospho-beta-D-ribosyl)-5-[(5-phospho-beta-D-ribosylamino)methylideneamino]imidazole-4-carboxamide = 5-[(5-phospho-1-deoxy-D-ribulos-1-ylimino)methylamino]-1-(5-phospho-beta-D-ribosyl)imidazole-4-carboxamide. The protein operates within amino-acid biosynthesis; L-histidine biosynthesis; L-histidine from 5-phospho-alpha-D-ribose 1-diphosphate: step 4/9. The sequence is that of 1-(5-phosphoribosyl)-5-[(5-phosphoribosylamino)methylideneamino] imidazole-4-carboxamide isomerase from Clostridium botulinum (strain Okra / Type B1).